Reading from the N-terminus, the 565-residue chain is Sulfite reductase [NADPH] hemoprotein beta-component (565 aa).

Residues cysteine 429, cysteine 435, cysteine 474, and cysteine 478 each contribute to the [4Fe-4S] cluster site. Cysteine 478 provides a ligand contact to siroheme.

It belongs to the nitrite and sulfite reductase 4Fe-4S domain family. Alpha(8)-beta(8). The alpha component is a flavoprotein, the beta component is a hemoprotein. Requires siroheme as cofactor. It depends on [4Fe-4S] cluster as a cofactor.

The catalysed reaction is hydrogen sulfide + 3 NADP(+) + 3 H2O = sulfite + 3 NADPH + 4 H(+). It participates in sulfur metabolism; hydrogen sulfide biosynthesis; hydrogen sulfide from sulfite (NADPH route): step 1/1. In terms of biological role, component of the sulfite reductase complex that catalyzes the 6-electron reduction of sulfite to sulfide. This is one of several activities required for the biosynthesis of L-cysteine from sulfate. In Shewanella sp. (strain MR-7), this protein is Sulfite reductase [NADPH] hemoprotein beta-component.